The chain runs to 438 residues: L-cysteine:1D-myo-inositol 2-amino-2-deoxy-alpha-D-glucopyranoside ligase (438 aa).

Residues 1–27 (MDSWTSPDVPALPFTAEGPRVHDTARG) form a disordered region. Cys45 is a binding site for Zn(2+). L-cysteinyl-5'-AMP-binding positions include 45–48 (CGIT), Thr60, and 83–85 (NVT). The 'HIGH' region signature appears at 47-57 (ITPYDATHLGH). The 'ERGGDP' region motif lies at 197 to 202 (DRGGDP). Trp238 contributes to the L-cysteinyl-5'-AMP binding site. Cys242 is a Zn(2+) binding site. 260-262 (GDD) serves as a coordination point for L-cysteinyl-5'-AMP. His267 is a binding site for Zn(2+). Residue Val293 participates in L-cysteinyl-5'-AMP binding. The 'KMSKS' region signature appears at 299-303 (KMSKS).

Belongs to the class-I aminoacyl-tRNA synthetase family. MshC subfamily. As to quaternary structure, monomer. Requires Zn(2+) as cofactor.

The enzyme catalyses 1D-myo-inositol 2-amino-2-deoxy-alpha-D-glucopyranoside + L-cysteine + ATP = 1D-myo-inositol 2-(L-cysteinylamino)-2-deoxy-alpha-D-glucopyranoside + AMP + diphosphate + H(+). Its function is as follows. Catalyzes the ATP-dependent condensation of GlcN-Ins and L-cysteine to form L-Cys-GlcN-Ins. This is L-cysteine:1D-myo-inositol 2-amino-2-deoxy-alpha-D-glucopyranoside ligase from Kytococcus sedentarius (strain ATCC 14392 / DSM 20547 / JCM 11482 / CCUG 33030 / NBRC 15357 / NCTC 11040 / CCM 314 / 541) (Micrococcus sedentarius).